Here is a 432-residue protein sequence, read N- to C-terminus: Adenylosuccinate synthetase (432 aa).

Residues 12–18 (GDEGKGK) and 40–42 (GHT) contribute to the GTP site. Aspartate 13 acts as the Proton acceptor in catalysis. Residues aspartate 13 and glycine 40 each contribute to the Mg(2+) site. IMP contacts are provided by residues 13–16 (DEGK), 38–41 (NAGH), threonine 129, arginine 143, glutamine 224, threonine 239, and arginine 303. The active-site Proton donor is histidine 41. 299–305 (VTTGRRR) serves as a coordination point for substrate. GTP is bound by residues arginine 305, 331 to 333 (KLD), and 413 to 415 (GVG).

This sequence belongs to the adenylosuccinate synthetase family. As to quaternary structure, homodimer. Requires Mg(2+) as cofactor.

It is found in the cytoplasm. The enzyme catalyses IMP + L-aspartate + GTP = N(6)-(1,2-dicarboxyethyl)-AMP + GDP + phosphate + 2 H(+). The protein operates within purine metabolism; AMP biosynthesis via de novo pathway; AMP from IMP: step 1/2. Functionally, plays an important role in the de novo pathway of purine nucleotide biosynthesis. Catalyzes the first committed step in the biosynthesis of AMP from IMP. This chain is Adenylosuccinate synthetase, found in Mycobacterium avium (strain 104).